We begin with the raw amino-acid sequence, 210 residues long: Peroxynitrite isomerase (210 aa).

The GXWXGXG motif lies at 21–27; the sequence is GQWEGQG. His190 contacts heme b.

It belongs to the nitrobindin family. In terms of assembly, homodimer. Requires heme b as cofactor.

It carries out the reaction peroxynitrite = nitrate. Its pathway is nitrogen metabolism. Its function is as follows. Heme-binding protein able to scavenge peroxynitrite and to protect free L-tyrosine against peroxynitrite-mediated nitration, by acting as a peroxynitrite isomerase that converts peroxynitrite to nitrate. Therefore, this protein likely plays a role in peroxynitrite sensing and in the detoxification of reactive nitrogen and oxygen species (RNS and ROS, respectively). Is able to bind nitric oxide (NO) in vitro, but may act as a sensor of peroxynitrite levels in vivo. The polypeptide is Peroxynitrite isomerase (Renibacterium salmoninarum (strain ATCC 33209 / DSM 20767 / JCM 11484 / NBRC 15589 / NCIMB 2235)).